Reading from the N-terminus, the 308-residue chain is Cytochrome b (308 aa).

The next 4 helical transmembrane spans lie at 1–21 (FGLL…LLAA), 45–66 (WLIR…YLHI), 81–101 (WNIG…GYVL), and 146–166 (FFAL…VHLT). Heme b contacts are provided by H51 and H65. Residues H150 and H164 each contribute to the heme b site. A ubiquinone is bound at residue H169. 3 helical membrane passes run 194-214 (TKDM…ALFS), 256-276 (LGGV…PLLH), and 288-308 (LSQI…WVGS).

The protein belongs to the cytochrome b family. As to quaternary structure, the cytochrome bc1 complex contains 11 subunits: 3 respiratory subunits (MT-CYB, CYC1 and UQCRFS1), 2 core proteins (UQCRC1 and UQCRC2) and 6 low-molecular weight proteins (UQCRH/QCR6, UQCRB/QCR7, UQCRQ/QCR8, UQCR10/QCR9, UQCR11/QCR10 and a cleavage product of UQCRFS1). This cytochrome bc1 complex then forms a dimer. Heme b is required as a cofactor.

It is found in the mitochondrion inner membrane. Component of the ubiquinol-cytochrome c reductase complex (complex III or cytochrome b-c1 complex) that is part of the mitochondrial respiratory chain. The b-c1 complex mediates electron transfer from ubiquinol to cytochrome c. Contributes to the generation of a proton gradient across the mitochondrial membrane that is then used for ATP synthesis. This Pomatostomus temporalis (Grey-crowned babbler) protein is Cytochrome b (MT-CYB).